The chain runs to 804 residues: Probable protein phosphatase 2C 18 (804 aa).

A helical transmembrane segment spans residues 19–39; it reads DASGPVLFWCVLIIFAVPDAI. One can recognise a PPM-type phosphatase domain in the interval 129 to 434; that stretch reads KYIVSSMQGL…ENTTVILVQF (306 aa). Residues Asp-165, Gly-166, Gln-384, and Glu-425 each coordinate Mn(2+). Disordered stretches follow at residues 460-509, 564-599, 623-653, and 675-804; these read STSA…GGSA, DEVE…LNAS, PLQG…DDDV, and VDST…EGSP. Residues 468–499 show a composition bias toward low complexity; the sequence is GSDSDTSATSDEGVDDTATAGTTTTGYEAGSS. The segment covering 628–637 has biased composition (polar residues); sequence DVSSTSTNPN. A compositionally biased stretch (low complexity) spans 638–647; that stretch reads TATDTGSGSR. Residues 713-734 are compositionally biased toward polar residues; it reads LVNNDTTVADNNASGVADSTTV. The span at 776–789 shows a compositional bias: low complexity; sequence DATATATASASAAV. Acidic residues predominate over residues 790-804; sequence ADDEGTAPDDSEGSP.

This sequence belongs to the PP2C family. Mg(2+) serves as cofactor. Requires Mn(2+) as cofactor.

The protein resides in the membrane. The enzyme catalyses O-phospho-L-seryl-[protein] + H2O = L-seryl-[protein] + phosphate. It catalyses the reaction O-phospho-L-threonyl-[protein] + H2O = L-threonyl-[protein] + phosphate. In Oryza sativa subsp. japonica (Rice), this protein is Probable protein phosphatase 2C 18.